Consider the following 551-residue polypeptide: Scaffold protein D13 ortholog (551 aa).

It belongs to the poxviridae protein D13 family. Homotrimer. Self-assembles to form a layer. Interacts with A17 (via N-terminus); this interaction is necessary for D13 association with membranes.

The protein resides in the membrane. Scaffold protein which forms a transitory spherical honeycomb lattice providing curvature and rigidity to the convex membrane of crescent and immature virions (IV). This association occurs concomitantly with viral membrane formation. Targeted by the drug rifampicin, which prevents the formation of this lattice, and hence virus morphogenesis. In the presence of rifampicin, irregularly shaped membranes that lack the honeycomb layer accumulate around areas of electron-dense viroplasm. This layer is lost from virions during maturation from IV to mature virion (MV), through the proteolysis of A17 N-terminus. In Sus scrofa (Pig), this protein is Scaffold protein D13 ortholog.